Reading from the N-terminus, the 499-residue chain is Lysine--tRNA ligase (499 aa).

Positions 408 and 415 each coordinate Mg(2+).

Belongs to the class-II aminoacyl-tRNA synthetase family. In terms of assembly, homodimer. Mg(2+) serves as cofactor.

The protein localises to the cytoplasm. The enzyme catalyses tRNA(Lys) + L-lysine + ATP = L-lysyl-tRNA(Lys) + AMP + diphosphate. This is Lysine--tRNA ligase from Bacillus thuringiensis (strain Al Hakam).